A 372-amino-acid polypeptide reads, in one-letter code: Carbamoyl phosphate synthase small chain (372 aa).

Positions M1 to I186 are CPSase. L-glutamine contacts are provided by S52, G233, and G235. Residues I185–N372 form the Glutamine amidotransferase type-1 domain. The Nucleophile role is filled by C261. Positions 262, 265, 303, 305, and 306 each coordinate L-glutamine. Residues H345 and E347 contribute to the active site.

This sequence belongs to the CarA family. Composed of two chains; the small (or glutamine) chain promotes the hydrolysis of glutamine to ammonia, which is used by the large (or ammonia) chain to synthesize carbamoyl phosphate. Tetramer of heterodimers (alpha,beta)4.

It catalyses the reaction hydrogencarbonate + L-glutamine + 2 ATP + H2O = carbamoyl phosphate + L-glutamate + 2 ADP + phosphate + 2 H(+). The catalysed reaction is L-glutamine + H2O = L-glutamate + NH4(+). It participates in amino-acid biosynthesis; L-arginine biosynthesis; carbamoyl phosphate from bicarbonate: step 1/1. Its pathway is pyrimidine metabolism; UMP biosynthesis via de novo pathway; (S)-dihydroorotate from bicarbonate: step 1/3. In terms of biological role, small subunit of the glutamine-dependent carbamoyl phosphate synthetase (CPSase). CPSase catalyzes the formation of carbamoyl phosphate from the ammonia moiety of glutamine, carbonate, and phosphate donated by ATP, constituting the first step of 2 biosynthetic pathways, one leading to arginine and/or urea and the other to pyrimidine nucleotides. The small subunit (glutamine amidotransferase) binds and cleaves glutamine to supply the large subunit with the substrate ammonia. The sequence is that of Carbamoyl phosphate synthase small chain from Metallosphaera sedula (strain ATCC 51363 / DSM 5348 / JCM 9185 / NBRC 15509 / TH2).